Consider the following 261-residue polypeptide: uncharacterized protein (261 aa).

Residues His-7, His-9, Glu-96, His-132, His-156, and Asp-211 each coordinate a divalent metal cation.

This sequence belongs to the metallo-dependent hydrolases superfamily. TatD-type hydrolase family. Requires a divalent metal cation as cofactor.

This is an uncharacterized protein from Mycoplasma pneumoniae (strain ATCC 29342 / M129 / Subtype 1) (Mycoplasmoides pneumoniae).